Consider the following 485-residue polypeptide: MTIQHTQDLAQIRAMVPEMRRVKSIHFIGIGGAGMSGIAEVLLNEGYQITGSDLSENPVTERLVSKGATVFIGHQASNVEKASVVVVSTAINEENPEVMAARELRIPIVRRAEMLAELMRFRHGIAVAGTHGKTTTTALVTQIYSEAGLDPTFVNGGLVKSAGTNARLGSSRILIAEADESDASFLHLQPMVSIVTNIEADHMDTYGGDFETLKQTFIDFLHNLPFYGQAIVCIDDPVIRELIPRISRQVITYGFSEDADVRIEDYHQEGQQGKFTVVREGRANLDITLNIPGRHNALNASAAIAVATEDDISDEAILKAMAGTQGTGRRFDHLGEFDTGNGHAMLVDDYGHHPTEVDVTIHAARSGWQDKRLVMIFQPHRYSRTRDLYDDFANVLEQVDVLIMLDVYAAGEKPIAGADGRALCRTIRSRGKVDPIFVPEIEQLPSVLANVIQDGDLILTQGAGDVGKVAKQLAALELNISKMLG.

Residue 129–135 (GTHGKTT) participates in ATP binding.

This sequence belongs to the MurCDEF family.

It is found in the cytoplasm. It catalyses the reaction UDP-N-acetyl-alpha-D-muramate + L-alanine + ATP = UDP-N-acetyl-alpha-D-muramoyl-L-alanine + ADP + phosphate + H(+). It functions in the pathway cell wall biogenesis; peptidoglycan biosynthesis. Functionally, cell wall formation. This Vibrio campbellii (strain ATCC BAA-1116) protein is UDP-N-acetylmuramate--L-alanine ligase.